The chain runs to 260 residues: Rhythmically expressed gene 2 protein (260 aa).

The chain is Rhythmically expressed gene 2 protein (Reg-2) from Drosophila melanogaster (Fruit fly).